A 100-amino-acid chain; its full sequence is Aspartyl/glutamyl-tRNA(Asn/Gln) amidotransferase subunit C (100 aa).

The protein belongs to the GatC family. As to quaternary structure, heterotrimer of A, B and C subunits.

It catalyses the reaction L-glutamyl-tRNA(Gln) + L-glutamine + ATP + H2O = L-glutaminyl-tRNA(Gln) + L-glutamate + ADP + phosphate + H(+). The catalysed reaction is L-aspartyl-tRNA(Asn) + L-glutamine + ATP + H2O = L-asparaginyl-tRNA(Asn) + L-glutamate + ADP + phosphate + 2 H(+). Functionally, allows the formation of correctly charged Asn-tRNA(Asn) or Gln-tRNA(Gln) through the transamidation of misacylated Asp-tRNA(Asn) or Glu-tRNA(Gln) in organisms which lack either or both of asparaginyl-tRNA or glutaminyl-tRNA synthetases. The reaction takes place in the presence of glutamine and ATP through an activated phospho-Asp-tRNA(Asn) or phospho-Glu-tRNA(Gln). The protein is Aspartyl/glutamyl-tRNA(Asn/Gln) amidotransferase subunit C of Streptococcus pyogenes serotype M18 (strain MGAS8232).